We begin with the raw amino-acid sequence, 173 residues long: Translation initiation factor IF-3 (173 aa).

The protein belongs to the IF-3 family. As to quaternary structure, monomer.

The protein resides in the cytoplasm. Its function is as follows. IF-3 binds to the 30S ribosomal subunit and shifts the equilibrium between 70S ribosomes and their 50S and 30S subunits in favor of the free subunits, thus enhancing the availability of 30S subunits on which protein synthesis initiation begins. This is Translation initiation factor IF-3 from Campylobacter lari (strain RM2100 / D67 / ATCC BAA-1060).